Reading from the N-terminus, the 231-residue chain is Large ribosomal subunit protein uL1 (231 aa).

Belongs to the universal ribosomal protein uL1 family. As to quaternary structure, part of the 50S ribosomal subunit.

Its function is as follows. Binds directly to 23S rRNA. The L1 stalk is quite mobile in the ribosome, and is involved in E site tRNA release. In terms of biological role, protein L1 is also a translational repressor protein, it controls the translation of the L11 operon by binding to its mRNA. This chain is Large ribosomal subunit protein uL1, found in Acinetobacter baumannii (strain AB0057).